Here is a 102-residue protein sequence, read N- to C-terminus: Protein RnfH (102 aa).

The protein belongs to the UPF0125 (RnfH) family.

The chain is Protein RnfH from Pseudomonas entomophila (strain L48).